The sequence spans 192 residues: E3 ubiquitin-protein ligase RNF185 (192 aa).

A compositionally biased stretch (polar residues) spans 1 to 14 (MASKGPSASASTEN). A disordered region spans residues 1-30 (MASKGPSASASTENSSAGGPSGSSNGTGES). Residues 1 to 130 (MASKGPSASA…GGFQGFGFGD (130 aa)) lie on the Cytoplasmic side of the membrane. Over residues 15–27 (SSAGGPSGSSNGT) the composition is skewed to low complexity. The segment at 29 to 80 (ESGGQDSTFECNICLDTAKDAVISLCGHLFCWPCLHQWLETRPNRQVCPVCK) is required for ubiquitin ligase activity and protection against ER stress-induced cell death. An RING-type zinc finger spans residues 39–80 (CNICLDTAKDAVISLCGHLFCWPCLHQWLETRPNRQVCPVCK). The interval 90–123 (PLYGRGSTGQQDPREKTPPRPQGQRPEPENRGGF) is disordered. A helical transmembrane segment spans residues 131–151 (GGFQMSFGIGAFPFGIFATAF). At 152–171 (NINDGRPPPAVPGTPQYVDE) the chain is on the mitochondrial intermembrane side. A helical transmembrane segment spans residues 172–192 (QFLSRLFLFVALVIMFWLLIA).

As to quaternary structure, interacts with ATG5 and BNIP1.

It is found in the mitochondrion outer membrane. It localises to the endoplasmic reticulum membrane. It catalyses the reaction S-ubiquitinyl-[E2 ubiquitin-conjugating enzyme]-L-cysteine + [acceptor protein]-L-lysine = [E2 ubiquitin-conjugating enzyme]-L-cysteine + N(6)-ubiquitinyl-[acceptor protein]-L-lysine.. The protein operates within protein modification; protein ubiquitination. Functionally, E3 ubiquitin-protein ligase that regulates selective mitochondrial autophagy by mediating 'Lys-63'-linked polyubiquitination of BNIP1. Acts in the endoplasmic reticulum (ER)-associated degradation (ERAD) pathway, which targets misfolded proteins that accumulate in the endoplasmic reticulum (ER) for ubiquitination and subsequent proteasome-mediated degradation. Protects cells from ER stress-induced apoptosis. Responsible for the cotranslational ubiquitination and degradation of CFTR in the ERAD pathway. Also acts as a regulator of the innate antiviral response by catalyzing 'Lys-27'-linked polyubiquitination of CGAS, thereby promoting CGAS cyclic GMP-AMP synthase activity. Preferentially associates with the E2 enzymes UBE2J1 and UBE2J2. The protein is E3 ubiquitin-protein ligase RNF185 (Rnf185) of Rattus norvegicus (Rat).